A 578-amino-acid polypeptide reads, in one-letter code: Proline--tRNA ligase (578 aa).

It belongs to the class-II aminoacyl-tRNA synthetase family. ProS type 1 subfamily. In terms of assembly, homodimer.

The protein resides in the cytoplasm. It catalyses the reaction tRNA(Pro) + L-proline + ATP = L-prolyl-tRNA(Pro) + AMP + diphosphate. In terms of biological role, catalyzes the attachment of proline to tRNA(Pro) in a two-step reaction: proline is first activated by ATP to form Pro-AMP and then transferred to the acceptor end of tRNA(Pro). As ProRS can inadvertently accommodate and process non-cognate amino acids such as alanine and cysteine, to avoid such errors it has two additional distinct editing activities against alanine. One activity is designated as 'pretransfer' editing and involves the tRNA(Pro)-independent hydrolysis of activated Ala-AMP. The other activity is designated 'posttransfer' editing and involves deacylation of mischarged Ala-tRNA(Pro). The misacylated Cys-tRNA(Pro) is not edited by ProRS. This Burkholderia cenocepacia (strain ATCC BAA-245 / DSM 16553 / LMG 16656 / NCTC 13227 / J2315 / CF5610) (Burkholderia cepacia (strain J2315)) protein is Proline--tRNA ligase.